Reading from the N-terminus, the 679-residue chain is UvrABC system protein B (679 aa).

One can recognise a Helicase ATP-binding domain in the interval 25–412; the sequence is EGVNQGQRYQ…DGHLAEQVIR (388 aa). 38–45 is a binding site for ATP; sequence GATGTGKT. A Beta-hairpin motif is present at residues 91 to 114; the sequence is YYDYYQPEAYVPVSDTYIAKTSSI. Residues 429-591 enclose the Helicase C-terminal domain; it reads QVDDLLAEIR…IVPRPAGKRA (163 aa). The region spanning 639 to 674 is the UVR domain; the sequence is PELIDQLETKMKEAAKNLNFEEAASLRDRIKKFRQK.

It belongs to the UvrB family. As to quaternary structure, forms a heterotetramer with UvrA during the search for lesions. Interacts with UvrC in an incision complex.

Its subcellular location is the cytoplasm. Functionally, the UvrABC repair system catalyzes the recognition and processing of DNA lesions. A damage recognition complex composed of 2 UvrA and 2 UvrB subunits scans DNA for abnormalities. Upon binding of the UvrA(2)B(2) complex to a putative damaged site, the DNA wraps around one UvrB monomer. DNA wrap is dependent on ATP binding by UvrB and probably causes local melting of the DNA helix, facilitating insertion of UvrB beta-hairpin between the DNA strands. Then UvrB probes one DNA strand for the presence of a lesion. If a lesion is found the UvrA subunits dissociate and the UvrB-DNA preincision complex is formed. This complex is subsequently bound by UvrC and the second UvrB is released. If no lesion is found, the DNA wraps around the other UvrB subunit that will check the other stand for damage. The polypeptide is UvrABC system protein B (Prochlorococcus marinus (strain MIT 9313)).